We begin with the raw amino-acid sequence, 641 residues long: FAD-binding monooxygenase ausB (641 aa).

The tract at residues Met-1–Leu-68 is disordered. Positions Trp-49–Leu-68 are enriched in polar residues. FAD-binding positions include Thr-115–Trp-118, Asp-127–Ile-128, and Tyr-133. Met-125 to Asp-127 contributes to the NADP(+) binding site. Residues Thr-272–Gln-278 and Arg-295–Thr-296 contribute to the NADP(+) site.

It belongs to the FAD-binding monooxygenase family. Requires FAD as cofactor.

It catalyses the reaction protoaustinoid A + AH2 + O2 = berkeleyone A + A + H2O. The protein operates within secondary metabolite biosynthesis; terpenoid biosynthesis. FAD-binding monooxygenase; part of the gene cluster A that mediates the biosynthesis of the fungal meroterpenoid acetoxydehydroaustin. The first step of the pathway is the synthesis of 3,5-dimethylorsellinic acid by the polyketide synthase ausA. 3,5-dimethylorsellinic acid is then prenylated by the polyprenyl transferase ausN. Further epoxidation by the FAD-dependent monooxygenase ausM and cyclization by the probable terpene cyclase ausL lead to the formation of protoaustinoid A. Protoaustinoid A is then oxidized to spiro-lactone preaustinoid A3 by the combined action of the FAD-binding monooxygenases ausB and ausC, and the dioxygenase ausE. Acid-catalyzed keto-rearrangement and ring contraction of the tetraketide portion of preaustinoid A3 by ausJ lead to the formation of preaustinoid A4. The aldo-keto reductase ausK, with the help of ausH, is involved in the next step by transforming preaustinoid A4 into isoaustinone which is in turn hydroxylated by the P450 monooxygenase ausI to form austinolide. The cytochrome P450 monooxygenase ausG then modifies austinolide to austinol. Austinol is further acetylated to austin by the O-acetyltransferase ausP, which spontaneously changes to dehydroaustin. The cytochrome P450 monooxygenase then converts dehydroaustin is into 7-dehydrodehydroaustin. The hydroxylation catalyzed by ausR permits the second O-acetyltransferase ausQ to add an additional acetyl group to the molecule, leading to the formation of acetoxydehydroaustin. Due to genetic rearrangements of the clusters and the subsequent loss of some enzymes, the end product of the Penicillium brasilianum austinoid biosynthesis clusters is acetoxydehydroaustin. The protein is FAD-binding monooxygenase ausB of Penicillium brasilianum.